The sequence spans 556 residues: Arginine--tRNA ligase (556 aa).

The 'HIGH' region signature appears at 133–143 (ANPTGPIHIGH).

It belongs to the class-I aminoacyl-tRNA synthetase family. Monomer.

The protein resides in the cytoplasm. The catalysed reaction is tRNA(Arg) + L-arginine + ATP = L-arginyl-tRNA(Arg) + AMP + diphosphate. This chain is Arginine--tRNA ligase, found in Dehalococcoides mccartyi (strain ATCC BAA-2100 / JCM 16839 / KCTC 5957 / BAV1).